A 468-amino-acid polypeptide reads, in one-letter code: ATP synthase subunit beta (468 aa).

148 to 155 contributes to the ATP binding site; sequence GGAGVGKT.

This sequence belongs to the ATPase alpha/beta chains family. As to quaternary structure, F-type ATPases have 2 components, CF(1) - the catalytic core - and CF(0) - the membrane proton channel. CF(1) has five subunits: alpha(3), beta(3), gamma(1), delta(1), epsilon(1). CF(0) has three main subunits: a(1), b(2) and c(9-12). The alpha and beta chains form an alternating ring which encloses part of the gamma chain. CF(1) is attached to CF(0) by a central stalk formed by the gamma and epsilon chains, while a peripheral stalk is formed by the delta and b chains.

Its subcellular location is the cell inner membrane. The enzyme catalyses ATP + H2O + 4 H(+)(in) = ADP + phosphate + 5 H(+)(out). Produces ATP from ADP in the presence of a proton gradient across the membrane. The catalytic sites are hosted primarily by the beta subunits. The protein is ATP synthase subunit beta of Xanthomonas campestris pv. campestris (strain B100).